Here is a 326-residue protein sequence, read N- to C-terminus: Fos-related antigen 2 (326 aa).

N-acetylmethionine is present on Met-1. The tract at residues 1-39 is disordered; sequence MYQDYPGNFDTSSRGSSGSPAHAESYSSGGGGQQKFRVD. Positions 9–19 are enriched in polar residues; the sequence is FDTSSRGSSGS. Lys-35 participates in a covalent cross-link: Glycyl lysine isopeptide (Lys-Gly) (interchain with G-Cter in SUMO2). Lys-104 is subject to N6-acetyllysine; alternate. Lys-104 is covalently cross-linked (Glycyl lysine isopeptide (Lys-Gly) (interchain with G-Cter in SUMO2); alternate). Disordered stretches follow at residues 111 to 131, 193 to 244, and 289 to 326; these read GRRR…RIRR, ISPE…QRSV, and EQES…LLAL. The residue at position 120 (Ser-120) is a Phosphoserine. In terms of domain architecture, bZIP spans 124–187; sequence EEKRRIRRER…EKLEFMLVAH (64 aa). The basic motif stretch occupies residues 126 to 128; sequence KRR. The segment at 129 to 136 is leucine-zipper; the sequence is IRRERNKL. Ser-200 bears the Phosphoserine mark. Over residues 201-211 the composition is skewed to polar residues; it reads PPTSGLQSLRG. Lys-222 is covalently cross-linked (Glycyl lysine isopeptide (Lys-Gly) (interchain with G-Cter in SUMO2); alternate). A Glycyl lysine isopeptide (Lys-Gly) (interchain with G-Cter in SUMO1); alternate cross-link involves residue Lys-222. Position 230 is a phosphoserine (Ser-230). Lys-239 is covalently cross-linked (Glycyl lysine isopeptide (Lys-Gly) (interchain with G-Cter in SUMO2)). A phosphoserine mark is found at Ser-308 and Ser-320. Residues 308–320 show a composition bias toward low complexity; that stretch reads SSSGDQSSDSLNS.

Belongs to the bZIP family. Fos subfamily. As to quaternary structure, heterodimer. Interacts with the BAF multiprotein chromatin-remodeling complex subunits SMARCB1 and SMARCD1. Interacts with ARID1A and JUN. Expressed in the brain cortex. Expressed at night in pineal gland (at protein level). Also expressed in osteoblasts (at protein level).

It localises to the nucleus. Its function is as follows. Controls osteoclast survival and size. As a dimer with JUN, activates LIF transcription. Activates CEBPB transcription in PGE2-activated osteoblasts. The chain is Fos-related antigen 2 (Fosl2) from Rattus norvegicus (Rat).